The primary structure comprises 79 residues: Neurotoxin BmK-M9 (79 aa).

A signal peptide spans 1 to 14 (MISFALLLMTGVES). One can recognise an LCN-type CS-alpha/beta domain in the interval 16–78 (RDAYIAKPEN…VPIRVPGKCH (63 aa)). Disulfide bonds link C26–C77, C30–C50, C36–C60, and C40–C62. R79 is a propeptide (removed by a carboxypeptidase).

The protein belongs to the long (4 C-C) scorpion toxin superfamily. Sodium channel inhibitor family. Alpha subfamily. Expressed by the venom gland.

Its subcellular location is the secreted. Binds to sodium channels (Nav) and inhibits the inactivation of the activated channels, thereby blocking neuronal transmission. This toxin is active against mammals. This Olivierus martensii (Manchurian scorpion) protein is Neurotoxin BmK-M9.